A 324-amino-acid polypeptide reads, in one-letter code: Beta-ketoacyl-[acyl-carrier-protein] synthase III (324 aa).

Active-site residues include cysteine 114 and histidine 251. The segment at 252–256 (QANQR) is ACP-binding. The active site involves asparagine 281.

The protein belongs to the thiolase-like superfamily. FabH family. Homodimer.

The protein resides in the cytoplasm. The enzyme catalyses malonyl-[ACP] + acetyl-CoA + H(+) = 3-oxobutanoyl-[ACP] + CO2 + CoA. It functions in the pathway lipid metabolism; fatty acid biosynthesis. In terms of biological role, catalyzes the condensation reaction of fatty acid synthesis by the addition to an acyl acceptor of two carbons from malonyl-ACP. Catalyzes the first condensation reaction which initiates fatty acid synthesis and may therefore play a role in governing the total rate of fatty acid production. Possesses both acetoacetyl-ACP synthase and acetyl transacylase activities. Its substrate specificity determines the biosynthesis of branched-chain and/or straight-chain of fatty acids. In Rhodospirillum rubrum (strain ATCC 11170 / ATH 1.1.1 / DSM 467 / LMG 4362 / NCIMB 8255 / S1), this protein is Beta-ketoacyl-[acyl-carrier-protein] synthase III.